The sequence spans 356 residues: Phosphate acyltransferase (356 aa).

Belongs to the PlsX family. Homodimer. Probably interacts with PlsY.

Its subcellular location is the cytoplasm. The catalysed reaction is a fatty acyl-[ACP] + phosphate = an acyl phosphate + holo-[ACP]. It participates in lipid metabolism; phospholipid metabolism. Its function is as follows. Catalyzes the reversible formation of acyl-phosphate (acyl-PO(4)) from acyl-[acyl-carrier-protein] (acyl-ACP). This enzyme utilizes acyl-ACP as fatty acyl donor, but not acyl-CoA. The polypeptide is Phosphate acyltransferase (Escherichia coli (strain K12 / DH10B)).